Consider the following 820-residue polypeptide: DNA mismatch repair protein MutS (820 aa).

615–622 contributes to the ATP binding site; sequence GPNMAGKS.

This sequence belongs to the DNA mismatch repair MutS family.

This protein is involved in the repair of mismatches in DNA. It is possible that it carries out the mismatch recognition step. This protein has a weak ATPase activity. This is DNA mismatch repair protein MutS from Anaplasma phagocytophilum (strain HZ).